The following is a 428-amino-acid chain: Adenylosuccinate synthetase (428 aa).

GTP contacts are provided by residues 12–18 and 40–42; these read GDEGKGK and GHT. The Proton acceptor role is filled by D13. Residues D13 and G40 each contribute to the Mg(2+) site. Residues 13–16, 38–41, T128, R142, Q223, T238, and R302 contribute to the IMP site; these read DEGK and NAGH. H41 serves as the catalytic Proton donor. Residue 298–304 participates in substrate binding; the sequence is TTTGRPR. GTP is bound by residues R304, 330–332, and 412–414; these read SID and SVG.

Belongs to the adenylosuccinate synthetase family. In terms of assembly, homodimer. It depends on Mg(2+) as a cofactor.

Its subcellular location is the cytoplasm. It carries out the reaction IMP + L-aspartate + GTP = N(6)-(1,2-dicarboxyethyl)-AMP + GDP + phosphate + 2 H(+). The protein operates within purine metabolism; AMP biosynthesis via de novo pathway; AMP from IMP: step 1/2. Plays an important role in the de novo pathway of purine nucleotide biosynthesis. Catalyzes the first committed step in the biosynthesis of AMP from IMP. This is Adenylosuccinate synthetase from Geobacillus sp. (strain WCH70).